The chain runs to 504 residues: CDK5 regulatory subunit-associated protein 3 (504 aa).

Short sequence motifs (shuffled ATG8-binding motif) lie at residues Ile266–Gly269, Ile290–Gly293, and Ile308–Gly311. Residues Trp268–Val504 are required for interaction with UFL1 and mediates interaction with CHEK1. The interval Asp353–Glu368 is RPL10a-binding domain (RBD). Lys448 is covalently cross-linked (Glycyl lysine isopeptide (Lys-Gly) (interchain with G-Cter in SUMO2)).

This sequence belongs to the CDK5RAP3 family. Substrate adapter component of the UFM1 ribosome E3 ligase (UREL) complex, composed of UFL1, DDRGK1 and CDK5RAP3. Interaction with UFL1 anchors CDK5RAP3 in the cytoplasm, preventing its translocation to the nucleus which allows expression of the CCND1 cyclin and progression of cells through the G1/S transition. Interacts with ATG8 family proteins MAP1LC3A, MAP1LC3B, GABARAP, GABARAPL1 and GABARAPL2. Interacts with CDK5R1; competes with CDK5RAP1 and CDK5RAP2. Interacts with RELA. Interacts with CHEK1; may negatively regulate CHEK1 and thereby stimulate entry into mitosis. Interacts with CDKN2A/ARF and MDM2; forms a ternary complex involved in regulation of p53/TP53. Interacts with MAPK14. Interacts with CCNB1. Interacts with TUBG1; may regulate CDK5RAP3 in mitotic G2/M transition checkpoint. Post-translationally, may be phosphorylated by CDK5. Ubiquitinated. Probably triggers proteasomal degradation and is negatively regulated by UFL1. In terms of processing, may be ufmylated. Post-translationally, cleaved by caspases early during apoptosis, the resulting peptides may play a role in rupture of the nuclear envelope. As to expression, expressed in vascular endothelium. Up-regulated in failing heart. Highly expressed in the ventricular section in subacute and chronic ischemic heart failure.

It is found in the endoplasmic reticulum membrane. It localises to the cytoplasm. The protein resides in the nucleus. The protein localises to the cytoskeleton. Its subcellular location is the microtubule organizing center. It is found in the centrosome. Its function is as follows. Substrate adapter of E3 ligase complexes mediating ufmylation, the covalent attachment of the ubiquitin-like modifier UFM1 to substrate proteins, and which is involved in various processes, such as ribosome recycling and reticulophagy (also called ER-phagy). As part of the UREL complex, plays a key role in ribosome recycling by promoting mono-ufmylation of RPL26/uL24 subunit of the 60S ribosome. Ufmylation of RPL26/uL24 occurs on free 60S ribosomes following ribosome dissociation: it weakens the junction between post-termination 60S subunits and SEC61 translocons, promoting release and recycling of the large ribosomal subunit from the endoplasmic reticulum membrane. Ufmylation of RPL26/uL24 and subsequent 60S ribosome recycling either take place after normal termination of translation or after ribosome stalling during cotranslational translocation at the endoplasmic reticulum. Within the UREL complex, CDK5RAP3 acts as a substrate adapter that constrains UFL1 ligase activity to mono-ufmylate RPL26/uL24 at 'Lys-134'. The UREL complex is also involved in reticulophagy in response to endoplasmic reticulum stress by promoting ufmylation of proteins such as CYB5R3, thereby promoting lysosomal degradation of ufmylated proteins. Also acts as a regulator of transcription: negatively regulates NF-kappa-B-mediated gene transcription through the control of RELA phosphorylation. Also regulates mitotic G2/M transition checkpoint and mitotic G2 DNA damage checkpoint. Through its interaction with CDKN2A/ARF and MDM2 may induce MDM2-dependent p53/TP53 ubiquitination, stabilization and activation in the nucleus, thereby promoting G1 cell cycle arrest and inhibition of cell proliferation. May also play a role in the rupture of the nuclear envelope during apoptosis. May regulate MAPK14 activity by regulating its dephosphorylation by PPM1D/WIP1. Required for liver development. This Rattus norvegicus (Rat) protein is CDK5 regulatory subunit-associated protein 3.